A 563-amino-acid polypeptide reads, in one-letter code: Arginine--tRNA ligase (563 aa).

A 'HIGH' region motif is present at residues 121–131; it reads PNIAKPMSMGH.

It belongs to the class-I aminoacyl-tRNA synthetase family. Monomer.

It localises to the cytoplasm. The enzyme catalyses tRNA(Arg) + L-arginine + ATP = L-arginyl-tRNA(Arg) + AMP + diphosphate. This Leuconostoc mesenteroides subsp. mesenteroides (strain ATCC 8293 / DSM 20343 / BCRC 11652 / CCM 1803 / JCM 6124 / NCDO 523 / NBRC 100496 / NCIMB 8023 / NCTC 12954 / NRRL B-1118 / 37Y) protein is Arginine--tRNA ligase.